A 407-amino-acid polypeptide reads, in one-letter code: Imidazolonepropionase (407 aa).

Fe(3+) contacts are provided by His68 and His70. Zn(2+)-binding residues include His68 and His70. The 4-imidazolone-5-propanoate site is built by Arg77, Tyr140, and His173. Tyr140 serves as a coordination point for N-formimidoyl-L-glutamate. A Fe(3+)-binding site is contributed by His238. His238 serves as a coordination point for Zn(2+). Gln241 contacts 4-imidazolone-5-propanoate. Asp313 is a Fe(3+) binding site. Zn(2+) is bound at residue Asp313. 2 residues coordinate N-formimidoyl-L-glutamate: Asn315 and Gly317. Residue Thr318 participates in 4-imidazolone-5-propanoate binding.

It belongs to the metallo-dependent hydrolases superfamily. HutI family. It depends on Zn(2+) as a cofactor. Fe(3+) serves as cofactor.

The protein resides in the cytoplasm. It carries out the reaction 4-imidazolone-5-propanoate + H2O = N-formimidoyl-L-glutamate. Its pathway is amino-acid degradation; L-histidine degradation into L-glutamate; N-formimidoyl-L-glutamate from L-histidine: step 3/3. Its function is as follows. Catalyzes the hydrolytic cleavage of the carbon-nitrogen bond in imidazolone-5-propanoate to yield N-formimidoyl-L-glutamate. It is the third step in the universal histidine degradation pathway. This is Imidazolonepropionase from Burkholderia ambifaria (strain ATCC BAA-244 / DSM 16087 / CCUG 44356 / LMG 19182 / AMMD) (Burkholderia cepacia (strain AMMD)).